A 208-amino-acid chain; its full sequence is Protein GrpE (208 aa).

Residues 1–12 (MTNKDESVEKNT) are compositionally biased toward basic and acidic residues. The disordered stretch occupies residues 1–49 (MTNKDESVEKNTESTVEVTNVKQNIDDSVEQTEESKGHLQDEAIEETSD). A compositionally biased stretch (polar residues) spans 13–23 (ESTVEVTNVKQ).

This sequence belongs to the GrpE family. As to quaternary structure, homodimer.

Its subcellular location is the cytoplasm. Functionally, participates actively in the response to hyperosmotic and heat shock by preventing the aggregation of stress-denatured proteins, in association with DnaK and GrpE. It is the nucleotide exchange factor for DnaK and may function as a thermosensor. Unfolded proteins bind initially to DnaJ; upon interaction with the DnaJ-bound protein, DnaK hydrolyzes its bound ATP, resulting in the formation of a stable complex. GrpE releases ADP from DnaK; ATP binding to DnaK triggers the release of the substrate protein, thus completing the reaction cycle. Several rounds of ATP-dependent interactions between DnaJ, DnaK and GrpE are required for fully efficient folding. The polypeptide is Protein GrpE (Staphylococcus aureus (strain bovine RF122 / ET3-1)).